Here is a 429-residue protein sequence, read N- to C-terminus: GTPase Obg (429 aa).

Positions 1–158 (MFVDQVKIYV…RNVQLELKVL (158 aa)) constitute an Obg domain. The tract at residues 124–145 (RGNKRFATPANPAPELSENGEP) is disordered. Positions 159 to 329 (ADVGLVGFPS…LLLAIADKLE (171 aa)) constitute an OBG-type G domain. GTP-binding positions include 165 to 172 (GFPSVGKS), 190 to 194 (FTTIV), 212 to 215 (DLPG), 282 to 285 (NKMD), and 310 to 312 (SAV). 2 residues coordinate Mg(2+): serine 172 and threonine 192. The OCT domain maps to 351–429 (KYVAEEPDFE…LLDYEFEFMD (79 aa)).

Belongs to the TRAFAC class OBG-HflX-like GTPase superfamily. OBG GTPase family. As to quaternary structure, monomer. Mg(2+) is required as a cofactor.

It localises to the cytoplasm. Functionally, an essential GTPase which binds GTP, GDP and possibly (p)ppGpp with moderate affinity, with high nucleotide exchange rates and a fairly low GTP hydrolysis rate. Plays a role in control of the cell cycle, stress response, ribosome biogenesis and in those bacteria that undergo differentiation, in morphogenesis control. The polypeptide is GTPase Obg (Listeria innocua serovar 6a (strain ATCC BAA-680 / CLIP 11262)).